The sequence spans 753 residues: Photosystem I P700 chlorophyll a apoprotein A1 (753 aa).

A run of 8 helical transmembrane segments spans residues 73 to 96, 159 to 182, 198 to 222, 294 to 312, 349 to 372, 388 to 414, 436 to 458, and 534 to 552; these read IFSA…FHAA, LYSA…YHYH, MTHH…HVSL, IAHH…GHMY, WHAQ…HHMY, LNLF…IFMV, TIIS…LYIH, and FMIH…LILI. [4Fe-4S] cluster-binding residues include cysteine 576 and cysteine 585. A run of 2 helical transmembrane segments spans residues 592–613 and 667–689; these read HIFL…HFFW and LSAY…MFLF. Histidine 678 contacts chlorophyll a'. Residues methionine 686 and tyrosine 694 each coordinate chlorophyll a. Tryptophan 695 lines the phylloquinone pocket. A helical transmembrane segment spans residues 727 to 747; that stretch reads AVGLGHYLLGGIVTSWSFYLA.

Belongs to the PsaA/PsaB family. As to quaternary structure, the PsaA/B heterodimer binds the P700 chlorophyll special pair and subsequent electron acceptors. PSI consists of a core antenna complex that captures photons, and an electron transfer chain that converts photonic excitation into a charge separation. The cyanobacterial PSI reaction center is composed of one copy each of PsaA,B,C,D,E,F,I,J,K,L,M and X, and forms trimeric complexes. The cofactor is PSI electron transfer chain: 5 chlorophyll a, 1 chlorophyll a', 2 phylloquinones and 3 4Fe-4S clusters. PSI core antenna: 90 chlorophyll a, 22 carotenoids, 3 phospholipids and 1 galactolipid. P700 is a chlorophyll a/chlorophyll a' dimer, A0 is one or more chlorophyll a, A1 is one or both phylloquinones and FX is a shared 4Fe-4S iron-sulfur center..

It localises to the cellular thylakoid membrane. The enzyme catalyses reduced [plastocyanin] + hnu + oxidized [2Fe-2S]-[ferredoxin] = oxidized [plastocyanin] + reduced [2Fe-2S]-[ferredoxin]. Its function is as follows. PsaA and PsaB bind P700, the primary electron donor of photosystem I (PSI), as well as the electron acceptors A0, A1 and FX. PSI is a plastocyanin/cytochrome c6-ferredoxin oxidoreductase, converting photonic excitation into a charge separation, which transfers an electron from the donor P700 chlorophyll pair to the spectroscopically characterized acceptors A0, A1, FX, FA and FB in turn. Oxidized P700 is reduced on the lumenal side of the thylakoid membrane by plastocyanin or cytochrome c6. This Acaryochloris marina (strain MBIC 11017) protein is Photosystem I P700 chlorophyll a apoprotein A1.